Consider the following 439-residue polypeptide: 3beta-hydroxysteroid-dehydrogenase/decarboxylase isoform 1 (439 aa).

NAD(+) is bound at residue 16-21 (GGRGFA). N-linked (GlcNAc...) asparagine glycans are attached at residues Asn75 and Asn158. 2 residues coordinate NAD(+): Tyr161 and Lys165. Lys165 serves as the catalytic Proton donor. Asn327 carries an N-linked (GlcNAc...) asparagine glycan. The region spanning 371–439 (VTETIQWKKQ…MKVFGSKKID (69 aa)) is the Reticulon; atypical domain. Transmembrane regions (helical) follow at residues 381–401 (TLIAIVILITLYHNFVATTGS) and 405–425 (IITAVSKVLLVSSIFMFINGI).

Belongs to the 3-beta-HSD family.

It localises to the endoplasmic reticulum membrane. It catalyses the reaction a 3beta-hydroxysteroid-4alpha-carboxylate + NAD(+) = a 3-oxosteroid + CO2 + NADH. It carries out the reaction 4alpha-carboxy-4beta,14alpha-dimethyl-9beta,19-cyclo-5alpha-ergost-24(24(1))-en-3beta-ol + NAD(+) = cycloeucalenone + CO2 + NADH. It functions in the pathway steroid biosynthesis; zymosterol biosynthesis; zymosterol from lanosterol: step 4/6. Its function is as follows. 3beta-hydroxysteroid-dehydrogenase/decarboxylase involved in sterol synthesis. Catalyzes the formation of 3-oxosteroids from 3beta-hydroxysteroids-4alpha-carboxylate. Involved in the regulation of inflorescence internodes and leaves growth, probably by affecting auxin transporter activity possibly by altering sterol composition in the membranes. The protein is 3beta-hydroxysteroid-dehydrogenase/decarboxylase isoform 1 of Arabidopsis thaliana (Mouse-ear cress).